The primary structure comprises 410 residues: MRRMLINAIEIKKLRIALIDGQQLYDLNVENIDKKQRKSNIYKGKIVRIEPSLEAAFVDYGEKKNGFLPLKEISRNYFPNNCSNYRHLHIKNILKEGQECIVQIDKEERGTKGALLTTFISLAGNYLVLMPNCPHLEGISRKIEGIDRFHLKKIISMLMVPENMGIIIRTSGVGRSIETLQLDLNFRVKNWYTIKKSAEINTAPCLIHKESNIVIRTLRDYLKKDIQEIIVDNPEILELARDYMFNMNCSYFEKKIKLYTGSDPLFSYYKIESQINALLRRIVKLPSGGSIIIDYTEALTAIDINSSQSTKGVNIEETAFNTNYEAVREIARQLRLRDLGGLIVIDFIDMSVLKHQKMIELHLHQVLQKDRARVQVGSISQFGLLEMSRQCLGSPLKKINHNYLFEMQKC.

The S1 motif domain occupies 39–119; it reads SNIYKGKIVR…GTKGALLTTF (81 aa). 2 residues coordinate Mg(2+): Asp303 and Asp346.

Belongs to the RNase E/G family. RNase E subfamily. As to quaternary structure, component of the RNA degradosome, which is a multiprotein complex involved in RNA processing and mRNA degradation. Within the RNA degradosome, RNase E assembles into a homotetramer formed by a dimer of dimers. The cofactor is Mg(2+).

It is found in the cytoplasm. The protein localises to the cell inner membrane. It catalyses the reaction Endonucleolytic cleavage of single-stranded RNA in A- and U-rich regions.. Its function is as follows. Endoribonuclease that plays a central role in RNA processing and decay. Required for the maturation of 5S and 16S rRNAs and the majority of tRNAs. Also involved in the degradation of most mRNAs. In Buchnera aphidicola subsp. Baizongia pistaciae (strain Bp), this protein is Putative ribonuclease E (rne).